The primary structure comprises 360 residues: Aminomethyltransferase (360 aa).

The protein belongs to the GcvT family. The glycine cleavage system is composed of four proteins: P, T, L and H.

It catalyses the reaction N(6)-[(R)-S(8)-aminomethyldihydrolipoyl]-L-lysyl-[protein] + (6S)-5,6,7,8-tetrahydrofolate = N(6)-[(R)-dihydrolipoyl]-L-lysyl-[protein] + (6R)-5,10-methylene-5,6,7,8-tetrahydrofolate + NH4(+). Functionally, the glycine cleavage system catalyzes the degradation of glycine. This Legionella pneumophila (strain Corby) protein is Aminomethyltransferase.